We begin with the raw amino-acid sequence, 246 residues long: TVP38/TMEM64 family membrane protein MT0653 (246 aa).

5 helical membrane passes run L19–I39, L57–A77, L83–V103, A157–A177, and L196–A216.

It belongs to the TVP38/TMEM64 family.

Its subcellular location is the cell membrane. This Mycobacterium tuberculosis (strain CDC 1551 / Oshkosh) protein is TVP38/TMEM64 family membrane protein MT0653.